The primary structure comprises 619 residues: Transcription factor 7-like 2 (619 aa).

The segment covering 1-11 has biased composition (gly residues); the sequence is MPQLNGGGGDD. Residues 1–53 are CTNNB1-binding; sequence MPQLNGGGGDDLGANDELISFKDEGEQEEKSSENSSAERDLADVKSSLVNESE. The interval 1-96 is disordered; it reads MPQLNGGGGD…AKRQDGGLFK (96 aa). The segment covering 19 to 43 has biased composition (basic and acidic residues); sequence ISFKDEGEQEEKSSENSSAERDLAD. Residue Lys22 forms a Glycyl lysine isopeptide (Lys-Gly) (interchain with G-Cter in SUMO2) linkage. A compositionally biased stretch (polar residues) spans 47–57; sequence SLVNESETNQN. A compositionally biased stretch (basic and acidic residues) spans 63–91; the sequence is EAERRPPPRSESFRDKSRESLEEAAKRQD. 2 positions are modified to phosphothreonine; by NLK: Thr201 and Thr212. The interval 201–395 is mediates interaction with MAD2L2; sequence TPLITYSNEH…RRWHALSREE (195 aa). Over residues 318 to 328 the composition is skewed to polar residues; that stretch reads TVKQESSQSDV. 4 disordered regions span residues 318 to 350, 420 to 441, 496 to 547, and 574 to 619; these read TVKQ…KPHI, RDNY…TNEH, CLSP…AHLS, and DLPP…KSLE. Lys320 is covalently cross-linked (Glycyl lysine isopeptide (Lys-Gly) (interchain with G-Cter in SUMO)). The segment covering 335–346 has biased composition (basic and acidic residues); that stretch reads KHQDSKKEEEKK. Residues 350–418 constitute a DNA-binding region (HMG box); that stretch reads IKKPLNAFML…LHMQLYPGWS (69 aa). Residues 425–430 carry the Nuclear localization signal motif; sequence KKKKRK. A promoter-specific activation domain region spans residues 459-505; it reads SAPKKCRARFGLDQQNNWCGPCRRKKKCVRYIQGEGSCLSPPSSDGS. The span at 496 to 508 shows a compositional bias: low complexity; that stretch reads CLSPPSSDGSLLD. A Glycyl lysine isopeptide (Lys-Gly) (interchain with G-Cter in SUMO2) cross-link involves residue Lys539. Residues 574 to 603 show a composition bias toward low complexity; that stretch reads DLPPAALQPAAPSSSIAQPSTSSLHSHSSL. Positions 604–619 are enriched in polar residues; the sequence is AGTQPQPLSLVTKSLE.

Belongs to the TCF/LEF family. As to quaternary structure, interacts with TGFB1I1. Interacts with CTNNB1 (via the armadillo repeat); forms stable transcription complex. Interacts with EP300. Interacts with NLK. Interacts with CCDC85B (probably through the HMG box); prevents interaction with CTNNB1. Interacts with TNIK. Interacts with MAD2L2; prevents TCF7L2/TCF4 binding to promZIPK/DAPK3oters, negatively modulating its transcriptional activity. Interacts with ZIPK/DAPK3. Interacts with XIAP/BIRC4 and TLE3. Interacts with DDIT3/CHOP. The CTNNB1 and TCF7L2/TCF4 complex interacts with PML (isoform PML-4). Identified in a complex with CTNNB1 and FERMT2. Interacts with SPIN1. Interacts with C11orf84/SPINDOC in a SPIN1-dependent manner. Interacts with DAZAP2; the interaction results in localization of DAZAP2 to the nucleus. In terms of processing, in vitro, phosphorylated by TNIK. Post-translationally, phosphorylated at Thr-201 and/or Thr-212 by NLK. Phosphorylation by NLK at these sites inhibits DNA-binding by TCF7L2/TCF4, thereby preventing transcriptional activation of target genes of the canonical Wnt/beta-catenin signaling pathway. Polysumoylated. Sumoylation is enhanced by PIAS family members and desumoylation is enhanced by SENP2. Sumoylation/desumoylation regulates TCF7L2/TCF4 transcription activity in the Wnt/beta-catenin signaling pathway without altering interaction with CTNNB1 nor binding to DNA. As to expression, detected in epithelium from small intestine, with the highest expression at the top of the crypts and a gradient of expression from crypt to villus. Detected in colon epithelium and colon cancer, and in epithelium from mammary gland and carcinomas derived therefrom.

The protein resides in the nucleus. Its subcellular location is the PML body. In terms of biological role, participates in the Wnt signaling pathway and modulates MYC expression by binding to its promoter in a sequence-specific manner. Acts as a repressor in the absence of CTNNB1, and as activator in its presence. Activates transcription from promoters with several copies of the Tcf motif 5'-CCTTTGATC-3' in the presence of CTNNB1. TLE1, TLE2, TLE3 and TLE4 repress transactivation mediated by TCF7L2/TCF4 and CTNNB1. Expression of dominant-negative mutants results in cell-cycle arrest in G1. Necessary for the maintenance of the epithelial stem-cell compartment of the small intestine. This is Transcription factor 7-like 2 (TCF7L2) from Homo sapiens (Human).